A 324-amino-acid polypeptide reads, in one-letter code: Polyphosphate glucokinase (324 aa).

Residues 53 to 79 are disordered; it reads TSTDATADTPRTSPPSDTAGTTSRHRG. Residues 62-74 are compositionally biased toward polar residues; the sequence is PRTSPPSDTAGTT. 83 to 88 serves as a coordination point for ATP; it reads DIGGSS.

The protein belongs to the ROK (NagC/XylR) family. As to quaternary structure, homodimer.

It carries out the reaction [phosphate](n) + D-glucose = [phosphate](n-1) + D-glucose 6-phosphate + H(+). The catalysed reaction is D-glucose + ATP = D-glucose 6-phosphate + ADP + H(+). In terms of biological role, catalyzes the phosphorylation of glucose using polyphosphate or ATP as the phosphoryl donor. This Mycobacterium leprae (strain TN) protein is Polyphosphate glucokinase (ppgK).